The primary structure comprises 222 residues: ATP-dependent dethiobiotin synthetase BioD (222 aa).

ATP is bound at residue 12-17 (DVGKTI). Threonine 16 contributes to the Mg(2+) binding site. Lysine 37 is a catalytic residue. A substrate-binding site is contributed by threonine 41. ATP-binding positions include aspartate 49, 107-110 (EGAG), 167-168 (GS), and 197-199 (AEG). Residues aspartate 49 and glutamate 107 each coordinate Mg(2+).

The protein belongs to the dethiobiotin synthetase family. As to quaternary structure, homodimer. It depends on Mg(2+) as a cofactor.

Its subcellular location is the cytoplasm. It catalyses the reaction (7R,8S)-7,8-diammoniononanoate + CO2 + ATP = (4R,5S)-dethiobiotin + ADP + phosphate + 3 H(+). It functions in the pathway cofactor biosynthesis; biotin biosynthesis; biotin from 7,8-diaminononanoate: step 1/2. In terms of biological role, catalyzes a mechanistically unusual reaction, the ATP-dependent insertion of CO2 between the N7 and N8 nitrogen atoms of 7,8-diaminopelargonic acid (DAPA, also called 7,8-diammoniononanoate) to form a ureido ring. This chain is ATP-dependent dethiobiotin synthetase BioD, found in Corynebacterium diphtheriae (strain ATCC 700971 / NCTC 13129 / Biotype gravis).